A 182-amino-acid polypeptide reads, in one-letter code: UPF0397 protein BCG9842_B2659 (182 aa).

5 helical membrane-spanning segments follow: residues 9 to 29, 40 to 60, 71 to 91, 114 to 134, and 142 to 162; these read VVAIGIGAALYGILGLWGFSI, AILTVFGALFGPVAGLLIGLI, WGIWWGWVISSGIIGFSMGLI, ITGLVGIVIAIIFAGAFDIIV, and IVIQVLGATISDVIVFLVLGL.

Belongs to the UPF0397 family.

Its subcellular location is the cell membrane. This is UPF0397 protein BCG9842_B2659 from Bacillus cereus (strain G9842).